The chain runs to 500 residues: Glycogen synthase (500 aa).

K20 lines the ADP-alpha-D-glucose pocket.

The protein belongs to the glycosyltransferase 1 family. Bacterial/plant glycogen synthase subfamily.

The catalysed reaction is [(1-&gt;4)-alpha-D-glucosyl](n) + ADP-alpha-D-glucose = [(1-&gt;4)-alpha-D-glucosyl](n+1) + ADP + H(+). It participates in glycan biosynthesis; glycogen biosynthesis. Its function is as follows. Synthesizes alpha-1,4-glucan chains using ADP-glucose. This chain is Glycogen synthase, found in Desulforudis audaxviator (strain MP104C).